The following is a 562-amino-acid chain: Glucocorticoid modulatory element-binding protein 1 (562 aa).

Ala-2 bears the N-acetylalanine mark. The region spanning 72-156 is the SAND domain; the sequence is ASSIEANEDM…RKMMDSGQID (85 aa). Zn(2+) is bound at residue Cys-103. 4 residues coordinate DNA: Lys-129, Lys-133, Lys-136, and Arg-147. His-160, Cys-164, and Cys-168 together coordinate Zn(2+). Positions 311 to 357 form a coiled coil; that stretch reads LDNRRKQVEHGEEQFLYTLADLERQLEEQKKQAQDPRLKSQTVQNVV. The segment at 360 to 384 is disordered; the sequence is PVSTPKPPKRPRLQRPASTTVLSPS. The segment covering 375-384 has biased composition (polar residues); sequence PASTTVLSPS.

Homodimer, and heterodimer of GMEB1 and GMEB2. Interacts with the glucocorticoid receptor (NR3C1) and NCOA2/TIF2. May interact with HSP27 and CREB-binding protein (CBP). Interacts with TRIM63.

The protein resides in the nucleus. It localises to the cytoplasm. Functionally, trans-acting factor that binds to glucocorticoid modulatory elements (GME) present in the TAT (tyrosine aminotransferase) promoter and increases sensitivity to low concentrations of glucocorticoids. Also binds to the transferrin receptor promoter. The chain is Glucocorticoid modulatory element-binding protein 1 (Gmeb1) from Rattus norvegicus (Rat).